Here is a 462-residue protein sequence, read N- to C-terminus: ATP synthase subunit beta (462 aa).

Glycine 151 to threonine 158 lines the ATP pocket.

This sequence belongs to the ATPase alpha/beta chains family. F-type ATPases have 2 components, CF(1) - the catalytic core - and CF(0) - the membrane proton channel. CF(1) has five subunits: alpha(3), beta(3), gamma(1), delta(1), epsilon(1). CF(0) has four main subunits: a(1), b(1), b'(1) and c(9-12).

The protein localises to the cell inner membrane. The enzyme catalyses ATP + H2O + 4 H(+)(in) = ADP + phosphate + 5 H(+)(out). Functionally, produces ATP from ADP in the presence of a proton gradient across the membrane. The catalytic sites are hosted primarily by the beta subunits. The polypeptide is ATP synthase subunit beta (Chlorobium phaeobacteroides (strain DSM 266 / SMG 266 / 2430)).